We begin with the raw amino-acid sequence, 214 residues long: uncharacterized protein (214 aa).

Helical transmembrane passes span 19 to 39 (IAIF…SYIL) and 50 to 70 (LALF…LLIG).

It is found in the cell membrane. This is an uncharacterized protein from Methanocaldococcus jannaschii (strain ATCC 43067 / DSM 2661 / JAL-1 / JCM 10045 / NBRC 100440) (Methanococcus jannaschii).